A 204-amino-acid polypeptide reads, in one-letter code: Signal peptidase I (204 aa).

Topologically, residues 1-10 (MNLFKNFLKE) are cytoplasmic. A helical transmembrane segment spans residues 11-30 (WGLFLLILSLLALSRIFFWS). At 31–204 (NVRVEGHSMD…FWPITRIGTF (174 aa)) the chain is on the extracellular side. Catalysis depends on residues serine 38 and lysine 76.

The protein belongs to the peptidase S26 family.

Its subcellular location is the cell membrane. It catalyses the reaction Cleavage of hydrophobic, N-terminal signal or leader sequences from secreted and periplasmic proteins.. This is Signal peptidase I (lepB) from Streptococcus pneumoniae (strain ATCC BAA-255 / R6).